Consider the following 114-residue polypeptide: Photosystem II reaction center Psb28 protein (114 aa).

Belongs to the Psb28 family. In terms of assembly, part of the photosystem II complex.

Its subcellular location is the plastid. It is found in the chloroplast thylakoid membrane. The sequence is that of Photosystem II reaction center Psb28 protein from Thalassiosira pseudonana (Marine diatom).